A 40-amino-acid polypeptide reads, in one-letter code: Alpha-conotoxin GIC (40 aa).

Residues 1–20 (SDGRNDAAKAFDLISSTVKK) constitute a propeptide that is removed on maturation. 2 disulfide bridges follow: C22/C28 and C23/C36. The tract at residues 24 to 26 (SHP) is ser-Xaa-Pro motif, crucial for potent interaction with nAChR. Cysteine amide is present on C36.

In terms of tissue distribution, expressed by the venom duct.

It is found in the secreted. Alpha-conotoxins bind to the nicotinic acetylcholine receptors (nAChR) and inhibit them. This toxin reversibly blocks neuronal nAChRs (alpha-3/beta-2 = alpha-6 or -3/beta-2 or -3 &gt; alpha-3/beta-4 = alpha-4/beta-2). The sequence is that of Alpha-conotoxin GIC from Conus geographus (Geography cone).